A 527-amino-acid polypeptide reads, in one-letter code: Berberine bridge enzyme-like 8 (527 aa).

Positions 1-20 (MKYALILVLFFVVFIWQSSS) are cleaved as a signal peptide. Cysteine 31 and cysteine 93 are oxidised to a cystine. 2 N-linked (GlcNAc...) asparagine glycosylation sites follow: asparagine 51 and asparagine 68. The region spanning 71–247 (STPKPFLIIA…LAYKINLVEV (177 aa)) is the FAD-binding PCMH-type domain. The segment at residues 108 to 172 (HDYDGLSYVT…KTLAYPAGIC (65 aa)) is a cross-link (6-(S-cysteinyl)-8alpha-(pros-histidyl)-FAD (His-Cys)). 3 N-linked (GlcNAc...) asparagine glycosylation sites follow: asparagine 250, asparagine 263, and asparagine 292.

It belongs to the oxygen-dependent FAD-linked oxidoreductase family. It depends on FAD as a cofactor. The FAD cofactor is bound via a bicovalent 6-S-cysteinyl, 8alpha-N1-histidyl FAD linkage.

The protein resides in the secreted. It is found in the cell wall. This is Berberine bridge enzyme-like 8 from Arabidopsis thaliana (Mouse-ear cress).